The chain runs to 93 residues: YcgL domain-containing protein Ssed_2518 (93 aa).

The region spanning 1 to 85 (MICAVYKSRR…PKVNLLEQHK (85 aa)) is the YcgL domain.

This chain is YcgL domain-containing protein Ssed_2518, found in Shewanella sediminis (strain HAW-EB3).